The chain runs to 324 residues: Glyoxylate/hydroxypyruvate reductase B (324 aa).

Residues arginine 237 and glutamate 266 contribute to the active site. The active-site Proton donor is the histidine 285.

This sequence belongs to the D-isomer specific 2-hydroxyacid dehydrogenase family. GhrB subfamily. In terms of assembly, homodimer.

It localises to the cytoplasm. The catalysed reaction is glycolate + NADP(+) = glyoxylate + NADPH + H(+). It catalyses the reaction (R)-glycerate + NAD(+) = 3-hydroxypyruvate + NADH + H(+). The enzyme catalyses (R)-glycerate + NADP(+) = 3-hydroxypyruvate + NADPH + H(+). Functionally, catalyzes the NADPH-dependent reduction of glyoxylate and hydroxypyruvate into glycolate and glycerate, respectively. This Salmonella heidelberg (strain SL476) protein is Glyoxylate/hydroxypyruvate reductase B.